Consider the following 248-residue polypeptide: MVRYKATISYDGTLFSGFQRQPNARSIQEEIEKTLLRLNSGIPVTVHGAGRTDAGVHAYGQVIHFDLPQERDPEKLRFGLDTQCPDDIDIVSIELVSEEFHARYSKHIKTYEFLVDAGRPKNPMMRNYAIHYPYPLSLALMQEAAMELVGTHDFTGFTASGTSVENKVRTITQASVSIDEKTGFYVFAFSGNGFLYKQVRNMVGTLLKIGNGRMPVSQAKTVLESRDRNLAGPTVAGNGLYLKEIRYE.

Asp-53 (nucleophile) is an active-site residue. Substrate is bound at residue Tyr-111.

It belongs to the tRNA pseudouridine synthase TruA family. Homodimer.

The catalysed reaction is uridine(38/39/40) in tRNA = pseudouridine(38/39/40) in tRNA. Formation of pseudouridine at positions 38, 39 and 40 in the anticodon stem and loop of transfer RNAs. The sequence is that of tRNA pseudouridine synthase A from Streptococcus thermophilus (strain ATCC BAA-491 / LMD-9).